Here is a 97-residue protein sequence, read N- to C-terminus: Large ribosomal subunit protein eL21 (97 aa).

Residues 1–24 (MVQKAHSFRRKTRKKLRKHPRRRG) are compositionally biased toward basic residues. The disordered stretch occupies residues 1–25 (MVQKAHSFRRKTRKKLRKHPRRRGL).

It belongs to the eukaryotic ribosomal protein eL21 family.

In Pyrococcus abyssi (strain GE5 / Orsay), this protein is Large ribosomal subunit protein eL21 (rpl21e).